Reading from the N-terminus, the 405-residue chain is Phosphopentomutase (405 aa).

Mn(2+) contacts are provided by Asp10, Asp305, His310, Asp346, His347, and His358.

It belongs to the phosphopentomutase family. Requires Mn(2+) as cofactor.

The protein localises to the cytoplasm. It carries out the reaction 2-deoxy-alpha-D-ribose 1-phosphate = 2-deoxy-D-ribose 5-phosphate. The enzyme catalyses alpha-D-ribose 1-phosphate = D-ribose 5-phosphate. The protein operates within carbohydrate degradation; 2-deoxy-D-ribose 1-phosphate degradation; D-glyceraldehyde 3-phosphate and acetaldehyde from 2-deoxy-alpha-D-ribose 1-phosphate: step 1/2. Isomerase that catalyzes the conversion of deoxy-ribose 1-phosphate (dRib-1-P) and ribose 1-phosphate (Rib-1-P) to deoxy-ribose 5-phosphate (dRib-5-P) and ribose 5-phosphate (Rib-5-P), respectively. This Methylorubrum extorquens (strain CM4 / NCIMB 13688) (Methylobacterium extorquens) protein is Phosphopentomutase.